Here is a 310-residue protein sequence, read N- to C-terminus: Homoserine O-acetyltransferase (310 aa).

The active-site Acyl-thioester intermediate is the C142. Substrate contacts are provided by K163 and S192. H235 (proton acceptor) is an active-site residue. Residue E237 is part of the active site. R249 is a substrate binding site.

This sequence belongs to the MetA family.

Its subcellular location is the cytoplasm. The catalysed reaction is L-homoserine + acetyl-CoA = O-acetyl-L-homoserine + CoA. It participates in amino-acid biosynthesis; L-methionine biosynthesis via de novo pathway; O-acetyl-L-homoserine from L-homoserine: step 1/1. Functionally, transfers an acetyl group from acetyl-CoA to L-homoserine, forming acetyl-L-homoserine. In Parabacteroides distasonis (strain ATCC 8503 / DSM 20701 / CIP 104284 / JCM 5825 / NCTC 11152), this protein is Homoserine O-acetyltransferase.